A 205-amino-acid polypeptide reads, in one-letter code: Ferritin heavy chain (205 aa).

The first 19 residues, 1 to 19 (MVKLIASLLLLAVVAQAYG), serve as a signal peptide directing secretion. The Ferritin-like diiron domain occupies 35 to 190 (VDMKDACIKG…GKLTTLKKMM (156 aa)). A disulfide bridge connects residues Cys-41 and Cys-150. Residues Glu-52, Glu-87, His-90, Glu-136, and Gln-172 each coordinate Fe cation.

The protein belongs to the ferritin family. In terms of assembly, oligomer of 12 light (L) chains and 12 heavy (H) chains; L and H chains are disulfide-linked. The functional molecule forms a roughly spherical shell with a diameter of 12 nm and contains a central cavity into which the insoluble ferric iron core is deposited. As to expression, expressed in hemolymph and gut (at protein level). Expressed in the head (at protein level). Expressed in thorax and abdomen.

The protein localises to the golgi apparatus. It localises to the secreted. The catalysed reaction is 4 Fe(2+) + O2 + 4 H(+) = 4 Fe(3+) + 2 H2O. In terms of biological role, stores iron in a soluble, non-toxic, readily available form. Important for iron homeostasis. Iron is taken up in the ferrous form and deposited as ferric hydroxides after oxidation. Ferritin is composed of a heavy (H) chain which is responsible for the oxidation and uptake of ferrous iron, and a light (L) chain which facilitates the nucleation of the ferrihydrite iron core. Required for dietary iron absorption in the midgut. Involved in tissue iron detoxification by exporting excess iron. Functions as an antioxidant and protects the developing organs from cell-mediated ferroptosis. Required for embryo and larval development. Plays a role in blood cell (haemocyte) differentiation in the lymph gland at the larval stage. May also store Zn(2+) and Mn(2+) and thus may play a role in zinc and manganese homeostasis. This chain is Ferritin heavy chain, found in Drosophila melanogaster (Fruit fly).